A 340-amino-acid polypeptide reads, in one-letter code: Glyceraldehyde-3-phosphate dehydrogenase (340 aa).

NAD(+) contacts are provided by residues 11–12 and G111; that span reads SI. 140-142 contacts D-glyceraldehyde 3-phosphate; the sequence is SCN. The active-site Nucleophile is C141. R169 contacts NAD(+). 195–196 contacts D-glyceraldehyde 3-phosphate; it reads HG. Position 303 (Q303) interacts with NAD(+).

It belongs to the glyceraldehyde-3-phosphate dehydrogenase family. In terms of assembly, homotetramer.

The protein localises to the cytoplasm. The catalysed reaction is D-glyceraldehyde 3-phosphate + phosphate + NADP(+) = (2R)-3-phospho-glyceroyl phosphate + NADPH + H(+). It carries out the reaction D-glyceraldehyde 3-phosphate + phosphate + NAD(+) = (2R)-3-phospho-glyceroyl phosphate + NADH + H(+). Its pathway is carbohydrate degradation; glycolysis; pyruvate from D-glyceraldehyde 3-phosphate: step 1/5. The protein is Glyceraldehyde-3-phosphate dehydrogenase of Methanococcus maripaludis (strain C6 / ATCC BAA-1332).